Here is a 194-residue protein sequence, read N- to C-terminus: NADH-ubiquinone oxidoreductase subunit NUO2 (194 aa).

Fungal-specific subunit of the mitochondrial membrane respiratory chain NADH dehydrogenase (Complex I). Complex I functions in the transfer of electrons from NADH to the respiratory chain. The immediate electron acceptor for the enzyme is believed to be ubiquinone. Plays a role in cell wall integrity and is involved in osmotic and oxidative resistance, yeast to hypha transition, and virulence via providing the ability to damage and invade host cells such as oral epithelial cells. The sequence is that of NADH-ubiquinone oxidoreductase subunit NUO2 from Candida albicans (strain SC5314 / ATCC MYA-2876) (Yeast).